A 249-amino-acid chain; its full sequence is Type III pantothenate kinase (249 aa).

6–13 contacts ATP; it reads DCGNSFIK. Residues Tyr93 and 100-103 contribute to the substrate site; that span reads GLDR. Asp102 acts as the Proton acceptor in catalysis. Residue Asp122 participates in K(+) binding. Position 125 (Thr125) interacts with ATP. Thr181 lines the substrate pocket.

It belongs to the type III pantothenate kinase family. Homodimer. Requires NH4(+) as cofactor. K(+) is required as a cofactor.

It localises to the cytoplasm. The catalysed reaction is (R)-pantothenate + ATP = (R)-4'-phosphopantothenate + ADP + H(+). Its pathway is cofactor biosynthesis; coenzyme A biosynthesis; CoA from (R)-pantothenate: step 1/5. Its function is as follows. Catalyzes the phosphorylation of pantothenate (Pan), the first step in CoA biosynthesis. The protein is Type III pantothenate kinase of Pseudomonas syringae pv. syringae (strain B728a).